The chain runs to 252 residues: 2-succinyl-6-hydroxy-2,4-cyclohexadiene-1-carboxylate synthase (252 aa).

The protein belongs to the AB hydrolase superfamily. MenH family. Monomer.

The catalysed reaction is 5-enolpyruvoyl-6-hydroxy-2-succinyl-cyclohex-3-ene-1-carboxylate = (1R,6R)-6-hydroxy-2-succinyl-cyclohexa-2,4-diene-1-carboxylate + pyruvate. Its pathway is quinol/quinone metabolism; 1,4-dihydroxy-2-naphthoate biosynthesis; 1,4-dihydroxy-2-naphthoate from chorismate: step 3/7. It participates in quinol/quinone metabolism; menaquinone biosynthesis. Catalyzes a proton abstraction reaction that results in 2,5-elimination of pyruvate from 2-succinyl-5-enolpyruvyl-6-hydroxy-3-cyclohexene-1-carboxylate (SEPHCHC) and the formation of 2-succinyl-6-hydroxy-2,4-cyclohexadiene-1-carboxylate (SHCHC). The polypeptide is 2-succinyl-6-hydroxy-2,4-cyclohexadiene-1-carboxylate synthase (Salmonella agona (strain SL483)).